Here is a 208-residue protein sequence, read N- to C-terminus: Small ribosomal subunit protein uS4 (208 aa).

In terms of domain architecture, S4 RNA-binding spans 98–161 (RRLDNVIYRL…RKMPVIAEAQ (64 aa)).

The protein belongs to the universal ribosomal protein uS4 family. As to quaternary structure, part of the 30S ribosomal subunit. Contacts protein S5. The interaction surface between S4 and S5 is involved in control of translational fidelity.

Functionally, one of the primary rRNA binding proteins, it binds directly to 16S rRNA where it nucleates assembly of the body of the 30S subunit. With S5 and S12 plays an important role in translational accuracy. The sequence is that of Small ribosomal subunit protein uS4 from Oleidesulfovibrio alaskensis (strain ATCC BAA-1058 / DSM 17464 / G20) (Desulfovibrio alaskensis).